We begin with the raw amino-acid sequence, 729 residues long: Catalase-peroxidase (729 aa).

The segment at 1–24 (MDAKTNDGKAGQCPFTSGRGHKNR) is disordered. Positions 95–217 (WHSAGTYRIT…LAAVQMGLIY (123 aa)) form a cross-link, tryptophyl-tyrosyl-methioninium (Trp-Tyr) (with M-243). Residue His96 is the Proton acceptor of the active site. A cross-link (tryptophyl-tyrosyl-methioninium (Tyr-Met) (with W-95)) is located at residues 217–243 (YVNPEGPNGQPDPLAAAKDIRETFLRM). His258 contributes to the heme b binding site.

The protein belongs to the peroxidase family. Peroxidase/catalase subfamily. Homodimer or homotetramer. The cofactor is heme b. In terms of processing, formation of the three residue Trp-Tyr-Met cross-link is important for the catalase, but not the peroxidase activity of the enzyme.

The catalysed reaction is H2O2 + AH2 = A + 2 H2O. It catalyses the reaction 2 H2O2 = O2 + 2 H2O. Bifunctional enzyme with both catalase and broad-spectrum peroxidase activity. The chain is Catalase-peroxidase from Nitrobacter winogradskyi (strain ATCC 25391 / DSM 10237 / CIP 104748 / NCIMB 11846 / Nb-255).